Here is a 380-residue protein sequence, read N- to C-terminus: Cytochrome b (380 aa).

4 helical membrane passes run 34–54 (FGWL…FLAM), 78–99 (WLLR…YFHI), 114–134 (WNIG…GYVL), and 179–199 (FFTF…IHLL). Heme b-binding residues include His84 and His98. Heme b-binding residues include His183 and His197. His202 contacts a ubiquinone. A run of 4 helical transmembrane segments spans residues 227–247 (FKDL…STFA), 289–309 (LGGV…PIIH), 321–341 (AAKA…WIGG), and 348–368 (FISI…LIIP).

It belongs to the cytochrome b family. The cytochrome bc1 complex contains 3 respiratory subunits (MT-CYB, CYC1 and UQCRFS1), 2 core proteins (UQCRC1 and UQCRC2) and probably 6 low-molecular weight proteins. Heme b serves as cofactor.

It is found in the mitochondrion inner membrane. Functionally, component of the ubiquinol-cytochrome c reductase complex (complex III or cytochrome b-c1 complex) that is part of the mitochondrial respiratory chain. The b-c1 complex mediates electron transfer from ubiquinol to cytochrome c. Contributes to the generation of a proton gradient across the mitochondrial membrane that is then used for ATP synthesis. This Rana dybowskii (Dybovsky's frog) protein is Cytochrome b (mt-cyb).